Consider the following 241-residue polypeptide: Probable transcriptional regulatory protein str0195 (241 aa).

This sequence belongs to the TACO1 family. YeeN subfamily.

The protein resides in the cytoplasm. This chain is Probable transcriptional regulatory protein str0195, found in Streptococcus thermophilus (strain CNRZ 1066).